We begin with the raw amino-acid sequence, 144 residues long: Large ribosomal subunit protein uL15 (144 aa).

Positions 1-16 are enriched in basic residues; sequence MVVRKEKKSRKYRGYR. Positions 1-35 are disordered; that stretch reads MVVRKEKKSRKYRGYRTHGWGTKGQHRDRGAQGGR.

This sequence belongs to the universal ribosomal protein uL15 family. As to quaternary structure, part of the 50S ribosomal subunit.

Functionally, binds to the 23S rRNA. The chain is Large ribosomal subunit protein uL15 from Sulfolobus acidocaldarius (strain ATCC 33909 / DSM 639 / JCM 8929 / NBRC 15157 / NCIMB 11770).